The sequence spans 204 residues: Peptide deformylase (204 aa).

Residues Cys-131 and His-174 each coordinate Fe cation. Glu-175 is a catalytic residue. His-178 lines the Fe cation pocket.

The protein belongs to the polypeptide deformylase family. Requires Fe(2+) as cofactor.

The catalysed reaction is N-terminal N-formyl-L-methionyl-[peptide] + H2O = N-terminal L-methionyl-[peptide] + formate. In terms of biological role, removes the formyl group from the N-terminal Met of newly synthesized proteins. Requires at least a dipeptide for an efficient rate of reaction. N-terminal L-methionine is a prerequisite for activity but the enzyme has broad specificity at other positions. The protein is Peptide deformylase of Streptococcus pyogenes serotype M1.